The sequence spans 142 residues: Maximins y/H11 (142 aa).

An N-terminal signal peptide occupies residues 1 to 18 (MNFKYIVAVSFLITSGYA). The propeptide occupies 19–43 (ESVKNDEQSLSQRDVLEEESLREIR). Phe68 carries the phenylalanine amide modification. Residues 72–121 (SAEDHEVMKRLEAVIRDLDSLDHPEEASERETRGFNQEEIANLFTKKEKR) constitute a propeptide that is removed on maturation. Ile141 carries the isoleucine amide modification.

The protein belongs to the bombinin family. Expressed by the skin glands.

The protein localises to the secreted. In terms of biological role, maximin-y shows antimicrobial activity against bacteria and against the fungus C.albicans. It has little hemolytic activity. Maximin-H11 shows antimicrobial activity against bacteria and against the fungus C.albicans. Shows strong hemolytic activity. The protein is Maximins y/H11 of Bombina maxima (Giant fire-bellied toad).